Reading from the N-terminus, the 545-residue chain is MAAKEVVFGNDARVRMLAGVNILANAVKVTLGPKGRNVVLDKSFGSPLITKDGVSVAKEIELEDKFENMGAQMVKEVASKANDAAGDGTTTATVLAQAIVVEGLKAVAAGMNPMDLKRGIDKAVIAAVAELKALSQPCADSKAIAQVATISANSDESIGEIIATAMEKVGKEGVITVEEGQALENELDVVEGMQFDRGYLSPYFINKPETGSVELDHPFVLLVDKKISNIRELLPILEGLAKTGKPLLIVAEDVEGEALATLVVNNMRGIVKVAAVKAPGFGDRRKAMLQDVAILTGGTVIAEEIGLELEKATLEDLGTAKRVVITKDNTTIIDGNGEQTQIAARVSQIKQQVEESTSDYDKEKLQERMAKLAGGVAVIKVGAATEVEMKEKKARVEDALHATRAAVEEGVVPGGGVALVRVASKIAEVEVLNEDQKHGVVIALRAMEAPLRQIATNAGEEASVVANTVKNGSGNFGYNAGNDTYGDMLEMGILDPTKVTRCALQFAASIAGLMITTEAMVAEIPQNASQDMGGMGGMGGMGGMM.

ATP is bound by residues 30 to 33, Lys51, 87 to 91, Gly415, and Asp495; these read TLGP and DGTTT.

It belongs to the chaperonin (HSP60) family. In terms of assembly, forms a cylinder of 14 subunits composed of two heptameric rings stacked back-to-back. Interacts with the co-chaperonin GroES.

The protein resides in the cytoplasm. It catalyses the reaction ATP + H2O + a folded polypeptide = ADP + phosphate + an unfolded polypeptide.. Together with its co-chaperonin GroES, plays an essential role in assisting protein folding. The GroEL-GroES system forms a nano-cage that allows encapsulation of the non-native substrate proteins and provides a physical environment optimized to promote and accelerate protein folding. The chain is Chaperonin GroEL from Shewanella baltica (strain OS155 / ATCC BAA-1091).